Here is a 929-residue protein sequence, read N- to C-terminus: Isoleucine--tRNA ligase (929 aa).

The 'HIGH' region signature appears at 57–67 (PYANGNIHVGH). Glutamate 554 is an L-isoleucyl-5'-AMP binding site. The 'KMSKS' region motif lies at 595–599 (KMSKS). Lysine 598 lines the ATP pocket. Positions 888, 891, 908, and 911 each coordinate Zn(2+).

This sequence belongs to the class-I aminoacyl-tRNA synthetase family. IleS type 1 subfamily. As to quaternary structure, monomer. It depends on Zn(2+) as a cofactor.

The protein localises to the cytoplasm. The catalysed reaction is tRNA(Ile) + L-isoleucine + ATP = L-isoleucyl-tRNA(Ile) + AMP + diphosphate. Catalyzes the attachment of isoleucine to tRNA(Ile). As IleRS can inadvertently accommodate and process structurally similar amino acids such as valine, to avoid such errors it has two additional distinct tRNA(Ile)-dependent editing activities. One activity is designated as 'pretransfer' editing and involves the hydrolysis of activated Val-AMP. The other activity is designated 'posttransfer' editing and involves deacylation of mischarged Val-tRNA(Ile). This is Isoleucine--tRNA ligase from Streptococcus thermophilus (strain CNRZ 1066).